A 91-amino-acid chain; its full sequence is MSSYRQTLFILIILIVIILFVNEGQGAPHHDKRHTACVLKIFKALNVMCNHEGDADVLRRTASDCCRESCSLTEMLASCTLTSSEESTRDI.

The signal sequence occupies residues methionine 1 to glycine 26. 3 disulfide bridges follow: cysteine 37/cysteine 66, cysteine 49/cysteine 79, and cysteine 65/cysteine 70.

Belongs to the insulin family.

Its subcellular location is the secreted. The sequence is that of Probable insulin-like peptide gamma-type 1 (ins-11) from Caenorhabditis elegans.